The primary structure comprises 316 residues: L-lactate dehydrogenase (316 aa).

NAD(+) is bound by residues 13 to 15 (GMI), 34 to 36 (FDI), tyrosine 67, and 79 to 83 (TAGFT). Arginine 95 is a substrate binding site. Residues 125–127 (VTN), leucine 150, and leucine 154 each bind NAD(+). Residues arginine 158 and histidine 182 each coordinate substrate. Position 182 (histidine 182) interacts with NAD(+). Residue histidine 182 is the Proton acceptor of the active site.

It belongs to the LDH/MDH superfamily. LDH family. Homotetramer.

The catalysed reaction is (S)-lactate + NAD(+) = pyruvate + NADH + H(+). It functions in the pathway fermentation; pyruvate fermentation to lactate; (S)-lactate from pyruvate: step 1/1. In Plasmodium berghei, this protein is L-lactate dehydrogenase.